A 314-amino-acid chain; its full sequence is Ribosomal RNA small subunit methyltransferase H (314 aa).

S-adenosyl-L-methionine-binding positions include 58 to 60 (GGH), Asp-76, Phe-103, Asp-119, and Gln-126.

Belongs to the methyltransferase superfamily. RsmH family.

It is found in the cytoplasm. The catalysed reaction is cytidine(1402) in 16S rRNA + S-adenosyl-L-methionine = N(4)-methylcytidine(1402) in 16S rRNA + S-adenosyl-L-homocysteine + H(+). In terms of biological role, specifically methylates the N4 position of cytidine in position 1402 (C1402) of 16S rRNA. The polypeptide is Ribosomal RNA small subunit methyltransferase H (Gloeobacter violaceus (strain ATCC 29082 / PCC 7421)).